The following is a 489-amino-acid chain: Betaine aldehyde dehydrogenase (489 aa).

Positions 26 and 93 each coordinate K(+). Residue 150–152 participates in NAD(+) binding; the sequence is GAW. Lysine 162 acts as the Charge relay system in catalysis. An NAD(+)-binding site is contributed by 176-179; it reads KPSE. A K(+)-binding site is contributed by valine 180. Position 229–232 (229–232) interacts with NAD(+); the sequence is GVET. Leucine 245 serves as a coordination point for K(+). Glutamate 251 acts as the Proton acceptor in catalysis. The NAD(+) site is built by glycine 253, cysteine 285, and glutamate 386. The active-site Nucleophile is the cysteine 285. Residue cysteine 285 is modified to Cysteine sulfenic acid (-SOH). K(+)-binding residues include lysine 456 and glycine 459. Glutamate 463 serves as the catalytic Charge relay system.

The protein belongs to the aldehyde dehydrogenase family. In terms of assembly, dimer of dimers. K(+) is required as a cofactor.

The enzyme catalyses betaine aldehyde + NAD(+) + H2O = glycine betaine + NADH + 2 H(+). It functions in the pathway amine and polyamine biosynthesis; betaine biosynthesis via choline pathway; betaine from betaine aldehyde: step 1/1. Its function is as follows. Involved in the biosynthesis of the osmoprotectant glycine betaine. Catalyzes the irreversible oxidation of betaine aldehyde to the corresponding acid. This Burkholderia multivorans (strain ATCC 17616 / 249) protein is Betaine aldehyde dehydrogenase.